Here is a 222-residue protein sequence, read N- to C-terminus: Beta-casein (222 aa).

The first 15 residues, methionine 1 to alanine 15, serve as a signal peptide directing secretion. Threonine 27 carries the post-translational modification Phosphothreonine. Phosphoserine occurs at positions 30, 32, 33, and 34.

The protein belongs to the beta-casein family. In terms of tissue distribution, mammary gland specific. Secreted in milk.

It is found in the secreted. Important role in determination of the surface properties of the casein micelles. The protein is Beta-casein (CSN2) of Capra hircus (Goat).